Reading from the N-terminus, the 538-residue chain is Putative cysteine ligase BshC (538 aa).

The stretch at 460-484 forms a coiled coil; sequence KINEQIELLERMLKRNVEKKHEVEL.

Belongs to the BshC family.

In terms of biological role, involved in bacillithiol (BSH) biosynthesis. May catalyze the last step of the pathway, the addition of cysteine to glucosamine malate (GlcN-Mal) to generate BSH. The chain is Putative cysteine ligase BshC from Bacillus cereus (strain AH187).